The following is a 318-amino-acid chain: 4-hydroxy-3-methylbut-2-enyl diphosphate reductase (318 aa).

Residue Cys-21 participates in [4Fe-4S] cluster binding. 2 residues coordinate (2E)-4-hydroxy-3-methylbut-2-enyl diphosphate: His-50 and His-83. Residues His-50 and His-83 each contribute to the dimethylallyl diphosphate site. His-50 and His-83 together coordinate isopentenyl diphosphate. Cys-105 lines the [4Fe-4S] cluster pocket. Residue His-133 coordinates (2E)-4-hydroxy-3-methylbut-2-enyl diphosphate. His-133 is a binding site for dimethylallyl diphosphate. His-133 is an isopentenyl diphosphate binding site. The active-site Proton donor is the Glu-135. Residue Thr-176 coordinates (2E)-4-hydroxy-3-methylbut-2-enyl diphosphate. [4Fe-4S] cluster is bound at residue Cys-206. 4 residues coordinate (2E)-4-hydroxy-3-methylbut-2-enyl diphosphate: Ser-234, Ser-235, Asn-236, and Ser-278. Residues Ser-234, Ser-235, Asn-236, and Ser-278 each contribute to the dimethylallyl diphosphate site. 4 residues coordinate isopentenyl diphosphate: Ser-234, Ser-235, Asn-236, and Ser-278.

Belongs to the IspH family. [4Fe-4S] cluster serves as cofactor.

It catalyses the reaction isopentenyl diphosphate + 2 oxidized [2Fe-2S]-[ferredoxin] + H2O = (2E)-4-hydroxy-3-methylbut-2-enyl diphosphate + 2 reduced [2Fe-2S]-[ferredoxin] + 2 H(+). The catalysed reaction is dimethylallyl diphosphate + 2 oxidized [2Fe-2S]-[ferredoxin] + H2O = (2E)-4-hydroxy-3-methylbut-2-enyl diphosphate + 2 reduced [2Fe-2S]-[ferredoxin] + 2 H(+). It participates in isoprenoid biosynthesis; dimethylallyl diphosphate biosynthesis; dimethylallyl diphosphate from (2E)-4-hydroxy-3-methylbutenyl diphosphate: step 1/1. The protein operates within isoprenoid biosynthesis; isopentenyl diphosphate biosynthesis via DXP pathway; isopentenyl diphosphate from 1-deoxy-D-xylulose 5-phosphate: step 6/6. Catalyzes the conversion of 1-hydroxy-2-methyl-2-(E)-butenyl 4-diphosphate (HMBPP) into a mixture of isopentenyl diphosphate (IPP) and dimethylallyl diphosphate (DMAPP). Acts in the terminal step of the DOXP/MEP pathway for isoprenoid precursor biosynthesis. The protein is 4-hydroxy-3-methylbut-2-enyl diphosphate reductase of Shewanella oneidensis (strain ATCC 700550 / JCM 31522 / CIP 106686 / LMG 19005 / NCIMB 14063 / MR-1).